The sequence spans 571 residues: Proline--tRNA ligase (571 aa).

This sequence belongs to the class-II aminoacyl-tRNA synthetase family. ProS type 1 subfamily. Homodimer.

It localises to the cytoplasm. It catalyses the reaction tRNA(Pro) + L-proline + ATP = L-prolyl-tRNA(Pro) + AMP + diphosphate. In terms of biological role, catalyzes the attachment of proline to tRNA(Pro) in a two-step reaction: proline is first activated by ATP to form Pro-AMP and then transferred to the acceptor end of tRNA(Pro). As ProRS can inadvertently accommodate and process non-cognate amino acids such as alanine and cysteine, to avoid such errors it has two additional distinct editing activities against alanine. One activity is designated as 'pretransfer' editing and involves the tRNA(Pro)-independent hydrolysis of activated Ala-AMP. The other activity is designated 'posttransfer' editing and involves deacylation of mischarged Ala-tRNA(Pro). The misacylated Cys-tRNA(Pro) is not edited by ProRS. The sequence is that of Proline--tRNA ligase from Pseudomonas fluorescens (strain Pf0-1).